We begin with the raw amino-acid sequence, 314 residues long: Peroxidase 2 (314 aa).

Residues Met-1–Ala-23 form the signal peptide. Pyrrolidone carboxylic acid is present on Gln-24. 4 disulfide bridges follow: Cys-34–Cys-109, Cys-67–Cys-72, Cys-115–Cys-310, and Cys-194–Cys-219. His-65 acts as the Proton acceptor in catalysis. Ca(2+)-binding residues include Asp-66, Val-69, Gly-71, Asp-73, and Ser-75. Residue Asn-148 is glycosylated (N-linked (GlcNAc...) asparagine). Position 157 (Pro-157) interacts with substrate. Residue Asn-169 is glycosylated (N-linked (GlcNAc...) asparagine). His-187 is a binding site for heme b. Thr-188 contributes to the Ca(2+) binding site. Asn-203 is a glycosylation site (N-linked (GlcNAc...) asparagine). Ca(2+) contacts are provided by Asp-234, Thr-237, and Asp-242. 2 N-linked (GlcNAc...) asparagine glycosylation sites follow: Asn-274 and Asn-309.

The protein belongs to the peroxidase family. Classical plant (class III) peroxidase subfamily. The cofactor is Ca(2+). Requires heme b as cofactor.

It localises to the secreted. It catalyses the reaction 2 a phenolic donor + H2O2 = 2 a phenolic radical donor + 2 H2O. In terms of biological role, removal of H(2)O(2), oxidation of toxic reductants, biosynthesis and degradation of lignin, suberization, auxin catabolism, response to environmental stresses such as wounding, pathogen attack and oxidative stress. These functions might be dependent on each isozyme/isoform in each plant tissue. This Oryza sativa subsp. indica (Rice) protein is Peroxidase 2 (PRX112).